Consider the following 634-residue polypeptide: MSYDASAIRVLKGLEGVRHRPAMYIGGTGVEGYHHLFKEILDNAVDEALAGYATEILVRLNEDGSLTVEDNGRGIPVDLMPEEGKPAVEVIYTTLHSGGKFEQGAYKVSGGLHGVGASVVNALSEWTVVEVFREGKHHRIAFSRGEVTEPLRVVGEAPRGKTGTRVTFKPDPEIFGNLRFDPSKIRARLREVAYLVAGLKLVFQDRQHGKEEVFLDKGGVASFAKALAEGEDLLYEKPFLIRGTHGEVEVEVGFLHTQGYNAEILTYANMIPTRDGGTHLTAFKSAYSRALNQYAKKAGLNKEKGPQPTGDDLLEGLYAVVSVKLPNPQFEGQTKGKLLNPEAGTAVGQVVYERLLEILEENPRIAKAVYEKALRAAQAREAARKARELVRRQNPLESDELPGKLADCQTENPEEAELFIVEGDSAGGSAKQGRDRRFQAILPLRGKILNVEKAGLSKALKNAEVRAMVSAIGVGIGGDGEAHFDLEGLRYHKIIIMTDADVDGSHIRTLLLTFFYRYMRPLIERGHVYIAQPPLYRLQVGKKVEYLYSDEELQARLKELEGKHYEVQRFKGLGEMNPEQLWETTMNPEKRVLKRVELQDALEASELFEKLMGQEVAPRREFIEEHARYAELDI.

An ATPase domain region spans residues 1–220; it reads MSYDASAIRV…EEVFLDKGGV (220 aa). Residues 221-390 are transducer domain; that stretch reads ASFAKALAEG…EAARKARELV (170 aa). One can recognise a Toprim domain in the interval 416–534; sequence AELFIVEGDS…RGHVYIAQPP (119 aa). Residues Glu-422, Asp-499, and Asp-501 each contribute to the Mg(2+) site.

Belongs to the type II topoisomerase GyrB family. Heterotetramer, composed of two GyrA and two GyrB chains. Non-hydrolyzable ATP analogs induce dimerization, novobiocin also induces a small amount of dimerization. The two subunits form an intertwined dimer where the GyrB ATPase transducer helix of 1 subunit connects to the Toprim domain of the other GyrB subunit through a 10 residue linker. In the heterotetramer, GyrA contains the active site tyrosine that forms a covalent intermediate with the DNA, while GyrB binds cofactors and catalyzes ATP hydrolysis. Mg(2+) serves as cofactor. It depends on Mn(2+) as a cofactor. Ca(2+) is required as a cofactor.

The protein resides in the cytoplasm. The enzyme catalyses ATP-dependent breakage, passage and rejoining of double-stranded DNA.. A type II topoisomerase that negatively supercoils closed circular double-stranded (ds) DNA in an ATP-dependent manner. It probably also catalyzes the interconversion of other topological isomers of double-stranded DNA rings, including catenanes. Relaxes negatively supercoiled DNA in an ATP-independent manner. At comparable concentrations T.thermophilus gyrase does not introduce as many negative supercoils into DNA as the E.coli enzyme. In terms of biological role, negative supercoiling favors strand separation, and DNA replication, transcription, recombination and repair, all of which involve strand separation. Type II topoisomerases break and join 2 DNA strands simultaneously in an ATP-dependent manner. The sequence is that of DNA gyrase subunit B from Thermus thermophilus (strain ATCC 27634 / DSM 579 / HB8).